We begin with the raw amino-acid sequence, 453 residues long: Tubulin alpha chain (453 aa).

Q11 provides a ligand contact to GTP. Position 40 is an N6-acetyllysine (K40). The GTP site is built by E71, G144, T145, T179, N206, and N228. E71 serves as a coordination point for Mg(2+). E254 is an active-site residue.

Belongs to the tubulin family. In terms of assembly, dimer of alpha and beta chains. A typical microtubule is a hollow water-filled tube with an outer diameter of 25 nm and an inner diameter of 15 nM. Alpha-beta heterodimers associate head-to-tail to form protofilaments running lengthwise along the microtubule wall with the beta-tubulin subunit facing the microtubule plus end conferring a structural polarity. Microtubules usually have 13 protofilaments but different protofilament numbers can be found in some organisms and specialized cells. Mg(2+) serves as cofactor. Post-translationally, undergoes a tyrosination/detyrosination cycle, the cyclic removal and re-addition of a C-terminal tyrosine residue by the enzymes tubulin tyrosine carboxypeptidase (TTCP) and tubulin tyrosine ligase (TTL), respectively. In terms of processing, acetylation of alpha chains at Lys-40 stabilizes microtubules and affects affinity and processivity of microtubule motors. This modification has a role in multiple cellular functions, ranging from cell motility, cell cycle progression or cell differentiation to intracellular trafficking and signaling.

It localises to the cytoplasm. It is found in the cytoskeleton. The catalysed reaction is GTP + H2O = GDP + phosphate + H(+). Functionally, tubulin is the major constituent of microtubules, a cylinder consisting of laterally associated linear protofilaments composed of alpha- and beta-tubulin heterodimers. Microtubules grow by the addition of GTP-tubulin dimers to the microtubule end, where a stabilizing cap forms. Below the cap, tubulin dimers are in GDP-bound state, owing to GTPase activity of alpha-tubulin. In Neospora caninum (Coccidian parasite), this protein is Tubulin alpha chain (TUBA).